We begin with the raw amino-acid sequence, 605 residues long: Beta-hexosaminidase ARB_07893 (605 aa).

Positions Met1–Ala18 are cleaved as a signal peptide. Asn30 carries N-linked (GlcNAc...) asparagine glycosylation. Glu293 serves as the catalytic Nucleophile. N-linked (GlcNAc...) asparagine glycosylation is present at Asn342. The Proton donor role is filled by Glu374. Asn449 is a glycosylation site (N-linked (GlcNAc...) asparagine).

This sequence belongs to the glycosyl hydrolase 20 family.

The protein resides in the secreted. It catalyses the reaction Hydrolysis of terminal non-reducing N-acetyl-D-hexosamine residues in N-acetyl-beta-D-hexosaminides.. Functionally, beta-hexosaminidase that shows a broad substrate specificity. This is Beta-hexosaminidase ARB_07893 from Arthroderma benhamiae (strain ATCC MYA-4681 / CBS 112371) (Trichophyton mentagrophytes).